Reading from the N-terminus, the 319-residue chain is Serpentine receptor class X-43 (319 aa).

The next 7 membrane-spanning stretches (helical) occupy residues 28 to 48 (VVSM…IGCF), 67 to 87 (AQLM…LLNI), 95 to 115 (YLFG…FLLM), 138 to 158 (IRTF…YLVV), 164 to 184 (FVFY…CGTL), 194 to 214 (TVLS…LMAF), and 267 to 287 (FFFT…VVVF).

It belongs to the G-protein coupled receptor 1 family. Expressed in ASI sensory neurons.

It is found in the cell membrane. Its subcellular location is the perikaryon. The protein resides in the cell projection. The protein localises to the cilium. Its function is as follows. Receptor for the ascaroside pheromone icas#9 which suppresses exploratory forgaging behavior. In response to ascaroside icas#9, may furthermore play a role in the expression of genes in the TGF-beta signaling pathway, such as daf-7, and in insulin signaling pathway, such as daf-28, which may in turn contribute to exploratory behavior. In Caenorhabditis elegans, this protein is Serpentine receptor class X-43.